The chain runs to 431 residues: MIRFAPSPTGDMHIGNLRVAIFNYIEAKKRNERFLIRIEDTDIERNIEGKDQEILQILDTFGLQYDDVVYQSKNFSFHQNFAYKLLNEGKAFACFCTPQELEKEREQAKKEKRAYRYSGKCENITLDEASQRGEPFVVRIKKPTGTIEFDDIIKGHLAFEPNEVDSFVILRADARPTYNFACAVDDMLYDITLVIRGEDHVSNTPKQIHIRNLLGYDKKIEYAHLPIILNEEGKKMSKRDKASSVKWLLEEGFLPEAIANYLILLGNKTPKEIFTLDEAIAWFDLKNISKAPAKFDIEKLRFINRAHLQMMSEEELEKALGVDEGLGALAKIYLEEASTLKELNTKIDLVLHGKRENETFREEIETLRNLLKSMELPESFDEFKKELMQKSGLKGKKFFKPLRILLTGSEHGPELSELYPAIKNRIKEVIQ.

Residues 6 to 16 (PSPTGDMHIGN) carry the 'HIGH' region motif. Positions 235 to 239 (KMSKR) match the 'KMSKS' region motif. An ATP-binding site is contributed by Lys238.

It belongs to the class-I aminoacyl-tRNA synthetase family. Glutamate--tRNA ligase type 1 subfamily. Monomer.

The protein resides in the cytoplasm. The catalysed reaction is tRNA(Glu) + L-glutamate + ATP = L-glutamyl-tRNA(Glu) + AMP + diphosphate. Catalyzes the attachment of glutamate to tRNA(Glu) in a two-step reaction: glutamate is first activated by ATP to form Glu-AMP and then transferred to the acceptor end of tRNA(Glu). This Nitratiruptor sp. (strain SB155-2) protein is Glutamate--tRNA ligase 1.